A 464-amino-acid chain; its full sequence is Spore coat protein SP65 (464 aa).

The first 17 residues, 1 to 17 (MKVLLLLVCLVFAYVNA), serve as a signal peptide directing secretion. Residues 21–43 (ACYNVVCPSNYQCRAEGDQAYCV) form the Follistatin-like 1 domain. Asparagine 111 carries N-linked (GlcNAc...) asparagine glycosylation. Follistatin-like domains lie at 121–143 (VCRD…PHCV) and 151–173 (LCRV…PTCL). Asparagine 247 carries an N-linked (GlcNAc...) asparagine glycan. A disordered region spans residues 250–320 (STTGATTGAT…STTGAATTAP (71 aa)).

As to quaternary structure, binds to the C-terminal region of pspB.

It localises to the spore wall. In terms of biological role, forms a triad with cellulose and pspB that is essential for spore outer layer formation. This Dictyostelium discoideum (Social amoeba) protein is Spore coat protein SP65 (cotE).